Consider the following 157-residue polypeptide: Large ribosomal subunit protein uL11 (157 aa).

Disordered regions lie at residues 1–28 and 138–157; these read MAGT…GPTP and NNPR…DILK. The span at 139-157 shows a compositional bias: basic and acidic residues; it reads NPREFKSRMEDGEYDDILK.

Belongs to the universal ribosomal protein uL11 family. In terms of assembly, part of the ribosomal stalk of the 50S ribosomal subunit. Interacts with L10 and the large rRNA to form the base of the stalk. L10 forms an elongated spine to which L12 dimers bind in a sequential fashion forming a multimeric L10(L12)X complex.

Its function is as follows. Forms part of the ribosomal stalk which helps the ribosome interact with GTP-bound translation factors. This is Large ribosomal subunit protein uL11 from Haloquadratum walsbyi (strain DSM 16790 / HBSQ001).